Consider the following 140-residue polypeptide: Encapsulated ferritin-like protein (140 aa).

Position 31 (Glu31) interacts with Ca(2+). Residue Glu32 participates in Fe cation binding. Glu34 contributes to the Ca(2+) binding site. Fe cation contacts are provided by Glu62 and His65. The interval 100–140 (ADTAGEGSGGDAAKGATAQGDGSLGIGSLKGEAALARPPRL) is disordered. The segment at 100–140 (ADTAGEGSGGDAAKGATAQGDGSLGIGSLKGEAALARPPRL) is targeting peptide.

The protein belongs to the ferritin-like superfamily. EncFtn family. As to quaternary structure, monomers form antiparallel dimers which assemble in a decameric ring 7 nm in diameter and 4.5 nm thick with a central channel (construct without targeting peptide). Growth in Fe(2+)-rich medium induces oligomerization, the monomer does not bind metals. The target peptide probably extends away from the ring, to allow binding to the interior of the encapsulin nanocompartment shell. Fe(2+) is required as a cofactor. The cofactor is Ca(2+).

The protein localises to the encapsulin nanocompartment. The catalysed reaction is 4 Fe(2+) + O2 + 4 H(+) = 4 Fe(3+) + 2 H2O. Its activity is regulated as follows. Ferroxidase activity inhibited by Zn(2+). Mutants at Glu-31, Glu-34 and Trp-38 are also inhibited by Zn(2+). Functionally, cargo protein of a type 1 encapsulin nanocompartment. A ferritin-like ferroxidase that mineralizes iron inside the encapsulin nanocompartment. Converts Fe(2+) to Fe(3+) that is released to the exterior of the decameric complex for deposition in the encapsulin nanocompartment. In solution the decamer binds 10-15 iron cations; in the encapsulin nanocompartment the decamer can bind up to 48 ions, perhaps via its internal channel and on its exterior. The empty encapsulin nanocompartment sequesters about 2200 Fe ions while the cargo-loaded nanocompartment can maximally sequester about 4150 Fe ions. EncFtn retains ferroxidase activity when encapsulated. Flux in the active site di-iron metal center is thought to be controlled by the 'entry site' of the protein, which both attracts metal and controls the rate of iron oxidation. Encapsulation in the nanocompartment does not alter either function of this protein. The chain is Encapsulated ferritin-like protein from Rhodospirillum rubrum (strain ATCC 11170 / ATH 1.1.1 / DSM 467 / LMG 4362 / NCIMB 8255 / S1).